Reading from the N-terminus, the 434-residue chain is MEDLFSPSILPPAPNISVPILLGWGLNLTLGQGAPASGPPSRRVRLVFLGVILVVAVAGNTTVLCRLCGGGGPWAGPKRRKMDFLLVQLALADLYACGGTALSQLAWELLGEPRAATGDLACRFLQLLQASGRGASAHLVVLIALERRRAVRLPHGRPLPARALAALGWLLALLLALPPAFVVRGDSPSPLPPPPPPTSLQPGAPPAARAWPGERRCHGIFAPLPRWHLQVYAFYEAVAGFVAPVTVLGVACGHLLSVWWRHRPQAPAAAAPWSASPGRAPAPSALPRAKVQSLKMSLLLALLFVGCELPYFAARLAAAWSSGPAGDWEGEGLSAALRVVAMANSALNPFVYLFFQAGDCRLRRQLRKRLGSLCCAPQGGAEDEEGPRGHQALYRQRWPHPHYHHARREPLDEGGLRPPPPRPRPLPCSCESAF.

At Met-1–Asp-3 the chain is on the extracellular side. A helical membrane pass occupies residues Leu-4–Trp-24. At Gly-25–Arg-43 the chain is on the cytoplasmic side. The helical transmembrane segment at Val-44–Leu-64 threads the bilayer. At Cys-65–Lys-81 the chain is on the extracellular side. Residues Met-82–Leu-102 traverse the membrane as a helical segment. Residues Ser-103–Arg-162 are Cytoplasmic-facing. Residues Ala-163–Val-183 traverse the membrane as a helical segment. Topologically, residues Arg-184–Ala-237 are extracellular. Positions Pro-188–Ala-210 are disordered. A compositionally biased stretch (pro residues) spans Ser-189 to Pro-205. The helical transmembrane segment at Val-238–Val-258 threads the bilayer. Over Trp-259 to Ser-293 the chain is Cytoplasmic. The chain crosses the membrane as a helical span at residues Leu-294–Ala-314. The Extracellular portion of the chain corresponds to Arg-315–Ser-334. Residues Ala-335–Phe-355 form a helical membrane-spanning segment. Residues Gln-356–Phe-434 are Cytoplasmic-facing. A compositionally biased stretch (basic residues) spans Trp-398 to Arg-407. The disordered stretch occupies residues Trp-398–Phe-434. Positions Arg-417 to Leu-426 are enriched in pro residues.

It belongs to the G-protein coupled receptor 1 family.

The protein resides in the cell membrane. In terms of biological role, orphan receptor. This Homo sapiens (Human) protein is Probable G-protein coupled receptor 150 (GPR150).